A 522-amino-acid polypeptide reads, in one-letter code: Echinocystic acid 23-monooxygenase (522 aa).

The helical; Signal-anchor for type II membrane protein transmembrane segment at Leu-4–Met-24 threads the bilayer. The N-linked (GlcNAc...) asparagine glycan is linked to Asn-190. Cys-470 contributes to the heme binding site.

It belongs to the cytochrome P450 family. Requires heme as cofactor. In terms of tissue distribution, mainly expressed in flowers and flower buds, to a lesser extent in young leaves and, at low levels, in old leaves, stems and roots.

The protein resides in the membrane. It functions in the pathway secondary metabolite biosynthesis; terpenoid biosynthesis. Its function is as follows. Component of the oleanane-type triterpene saponins (e.g. saponarioside A and saponarioside B) biosynthetic pathway, leading to the production of natural products with detergent properties used as traditional sources of soap. An oxidoreductase that facilitates the oxidation of the methyl group to a carboxyl group at the C-23 position of echinocystic acid, resulting in the formation of quillaic acid (QA). The sequence is that of Echinocystic acid 23-monooxygenase from Saponaria officinalis (Common soapwort).